A 1064-amino-acid chain; its full sequence is Alpha-aminoadipic semialdehyde synthase (1064 aa).

A lysine-ketoglutarate reductase region spans residues 24 to 445 (VNKWERRTPL…RACISYRGEL (422 aa)). A Phosphothreonine modification is found at T238. S458 carries the post-translational modification Phosphoserine. A saccharopine dehydrogenase region spans residues 583-1064 (MTKKSGVLIL…YGIKLMEKAE (482 aa)). L-saccharopine-binding positions include 703–704 (SY), D730, R830, and 852–854 (TLR). 729–731 (LDP) contributes to the NADP(+) binding site.

In the N-terminal section; belongs to the AlaDH/PNT family. It in the C-terminal section; belongs to the saccharopine dehydrogenase family. In terms of assembly, homodimer. In terms of processing, phosphorylation of Ser-458 seems important for the LKR activity. As to expression, ubiquitous, with higher levels in flowers. Isoform Long is mostly present in young leaves, cotyledons, root tips and mature root parts. Whereas isoform Short is mostly expressed in cotyledons and at low levels in all root parts.

It is found in the cytoplasm. The catalysed reaction is L-saccharopine + NADP(+) + H2O = L-lysine + 2-oxoglutarate + NADPH + H(+). The enzyme catalyses L-saccharopine + NAD(+) + H2O = (S)-2-amino-6-oxohexanoate + L-glutamate + NADH + H(+). It participates in amino-acid degradation; L-lysine degradation via saccharopine pathway; glutaryl-CoA from L-lysine: step 1/6. It functions in the pathway amino-acid degradation; L-lysine degradation via saccharopine pathway; glutaryl-CoA from L-lysine: step 2/6. The LKR activity is stimulated by NaCl. Functionally, bifunctional enzyme that catalyzes the first two steps in lysine degradation. The N-terminal and the C-terminal contain lysine-oxoglutarate reductase and saccharopine dehydrogenase activity, respectively. Negatively regulates free Lys accumulation in seeds. The sequence is that of Alpha-aminoadipic semialdehyde synthase (LKR/SDH) from Arabidopsis thaliana (Mouse-ear cress).